Consider the following 312-residue polypeptide: Olfactory receptor 4L1 (312 aa).

Residues methionine 1–isoleucine 25 are Extracellular-facing. Asparagine 5 carries N-linked (GlcNAc...) asparagine glycosylation. Residues phenylalanine 26–valine 49 traverse the membrane as a helical segment. Topologically, residues threonine 50–serine 57 are cytoplasmic. The helical transmembrane segment at proline 58 to proline 79 threads the bilayer. The Extracellular segment spans residues lysine 80–glutamine 100. Cysteine 97 and cysteine 189 are joined by a disulfide. Residues methionine 101–phenylalanine 120 traverse the membrane as a helical segment. Residues aspartate 121 to lysine 139 lie on the Cytoplasmic side of the membrane. Residues leucine 140–serine 158 form a helical membrane-spanning segment. Residues glutamine 159 to leucine 195 are Extracellular-facing. The chain crosses the membrane as a helical span at residues glutamate 196–isoleucine 219. Residues valine 220–lysine 235 lie on the Cytoplasmic side of the membrane. A helical transmembrane segment spans residues alanine 236–tyrosine 258. Over valine 259–lysine 269 the chain is Extracellular. Asparagine 268 carries N-linked (GlcNAc...) asparagine glycosylation. Residues threonine 270–leucine 289 form a helical membrane-spanning segment. The Cytoplasmic portion of the chain corresponds to arginine 290 to phenylalanine 312.

This sequence belongs to the G-protein coupled receptor 1 family.

It is found in the cell membrane. In terms of biological role, odorant receptor. This is Olfactory receptor 4L1 (OR4L1) from Homo sapiens (Human).